Consider the following 138-residue polypeptide: ATP synthase epsilon chain (138 aa).

The protein belongs to the ATPase epsilon chain family. F-type ATPases have 2 components, CF(1) - the catalytic core - and CF(0) - the membrane proton channel. CF(1) has five subunits: alpha(3), beta(3), gamma(1), delta(1), epsilon(1). CF(0) has three main subunits: a, b and c.

The protein resides in the cell membrane. Produces ATP from ADP in the presence of a proton gradient across the membrane. The chain is ATP synthase epsilon chain from Streptococcus equinus (Streptococcus bovis).